Here is a 372-residue protein sequence, read N- to C-terminus: Glutamate 5-kinase (372 aa).

An ATP-binding site is contributed by lysine 14. The substrate site is built by serine 54, aspartate 141, and asparagine 153. 173-174 (TD) is a binding site for ATP. Residues 280 to 358 (RGTLVLDAGA…EAIESILGYS (79 aa)) form the PUA domain.

It belongs to the glutamate 5-kinase family.

Its subcellular location is the cytoplasm. It carries out the reaction L-glutamate + ATP = L-glutamyl 5-phosphate + ADP. The protein operates within amino-acid biosynthesis; L-proline biosynthesis; L-glutamate 5-semialdehyde from L-glutamate: step 1/2. Its function is as follows. Catalyzes the transfer of a phosphate group to glutamate to form L-glutamate 5-phosphate. The chain is Glutamate 5-kinase from Pseudomonas putida (strain ATCC 700007 / DSM 6899 / JCM 31910 / BCRC 17059 / LMG 24140 / F1).